A 306-amino-acid polypeptide reads, in one-letter code: Aspartate carbamoyltransferase catalytic subunit (306 aa).

Arg-56 and Thr-57 together coordinate carbamoyl phosphate. Lys-84 contributes to the L-aspartate binding site. Residues Arg-106, His-134, and Gln-137 each contribute to the carbamoyl phosphate site. L-aspartate contacts are provided by Arg-167 and Arg-221. Residues Gly-262 and Pro-263 each contribute to the carbamoyl phosphate site.

It belongs to the aspartate/ornithine carbamoyltransferase superfamily. ATCase family. As to quaternary structure, heterododecamer (2C3:3R2) of six catalytic PyrB chains organized as two trimers (C3), and six regulatory PyrI chains organized as three dimers (R2).

It carries out the reaction carbamoyl phosphate + L-aspartate = N-carbamoyl-L-aspartate + phosphate + H(+). It participates in pyrimidine metabolism; UMP biosynthesis via de novo pathway; (S)-dihydroorotate from bicarbonate: step 2/3. Functionally, catalyzes the condensation of carbamoyl phosphate and aspartate to form carbamoyl aspartate and inorganic phosphate, the committed step in the de novo pyrimidine nucleotide biosynthesis pathway. This chain is Aspartate carbamoyltransferase catalytic subunit, found in Desulforudis audaxviator (strain MP104C).